The following is an 868-amino-acid chain: DNA topoisomerase 1 (868 aa).

Positions 3–148 (KSLVIVESPA…RFSRVVFNEI (146 aa)) constitute a Toprim domain. Positions 9 and 117 each coordinate Mg(2+). A Topo IA-type catalytic domain is found at 164 to 581 (NMDRVNAQQT…QFFKDFSSQL (418 aa)). Residues 198–203 (SAGRVQ) are interaction with DNA. Residue Y325 is the O-(5'-phospho-DNA)-tyrosine intermediate of the active site. 3 consecutive C4-type zinc fingers follow at residues 605–636 (CPTCGRNMAIRTASTGVFLGCTGYALPPKERC), 667–694 (CTKCGTAMDSYVIDAHRKIHICGNNPNC), and 716–739 (CDKCGADMHLKLGRFGKYMGCTNC).

This sequence belongs to the type IA topoisomerase family. Monomer. It depends on Mg(2+) as a cofactor.

It carries out the reaction ATP-independent breakage of single-stranded DNA, followed by passage and rejoining.. Functionally, releases the supercoiling and torsional tension of DNA, which is introduced during the DNA replication and transcription, by transiently cleaving and rejoining one strand of the DNA duplex. Introduces a single-strand break via transesterification at a target site in duplex DNA. The scissile phosphodiester is attacked by the catalytic tyrosine of the enzyme, resulting in the formation of a DNA-(5'-phosphotyrosyl)-enzyme intermediate and the expulsion of a 3'-OH DNA strand. The free DNA strand then undergoes passage around the unbroken strand, thus removing DNA supercoils. Finally, in the religation step, the DNA 3'-OH attacks the covalent intermediate to expel the active-site tyrosine and restore the DNA phosphodiester backbone. This is DNA topoisomerase 1 from Haemophilus influenzae (strain ATCC 51907 / DSM 11121 / KW20 / Rd).